A 323-amino-acid polypeptide reads, in one-letter code: Mortality factor 4-like protein 1 (323 aa).

A Tudor-knot domain is found at 12-62 (QEGERVLCFHGPLLYEAKCVKVAIKDKQVKYFIHYSGWNKNWDEWVPESRV). The interval 77–143 (QKANQEQYAE…RKKRARVDPT (67 aa)) is disordered. Residues 94–227 (PGKKTSGLQQ…VAGIKEYFNV (134 aa)) form a sufficient for interaction with SIN3A region. Lys-104 is subject to N6-acetyllysine. The segment at 125 to 191 (STSETPQPPR…FYLPAKKNVD (67 aa)) is interaction with RB1-1. The segment at 149–303 (TFMNRVEVKV…FLKYLAKNSA (155 aa)) is sufficient for interaction with PHF12. Residues 152-323 (NRVEVKVKIP…APPEYHRKAV (172 aa)) enclose the MRG domain. The tract at residues 284-305 (LALLLNYLHDFLKYLAKNSATL) is interaction with RB1-2.

As to quaternary structure, component of the NuA4 histone acetyltransferase complex which contains the catalytic subunit KAT5/TIP60 and the subunits EP400, TRRAP/PAF400, BRD8/SMAP, EPC1, DMAP1/DNMAP1, RUVBL1/TIP49, RUVBL2, ING3, actin, ACTL6A/BAF53A, MORF4L1/MRG15, MORF4L2/MRGX, MRGBP, YEATS4/GAS41, VPS72/YL1 and MEAF6. The NuA4 complex interacts with MYC and the adenovirus E1A protein. MORF4L1 may also participate in the formation of NuA4 related complexes which lack the KAT5/TIP60 catalytic subunit, but which include the SWI/SNF related protein SRCAP. Component of the mSin3A histone deacetylase complex, which includes SIN3A, HDAC2, ARID4B, MORF4L1, RBBP4/RbAp48, and RBBP7/RbAp46. May also interact with PHF12 and one or more as yet undefined members of the TLE (transducin-like enhancer of split) family of transcriptional repressors. Component of the SIN3B complex, which includes SIN3B, HDAC2 or HDAC1, PHF12 and MORF4L1. Interacts with RB1 and KAT8. Interacts with the N-terminus of MRFAP1. Found in a complex composed of MORF4L1, MRFAP1 and RB1. Interacts with the entire BRCA complex, which contains BRCA1, PALB2, BRCA2 and RAD51. Interacts with PALB2. Forms a complex with MSL1 and NUPR1.

It is found in the nucleus. Component of the NuA4 histone acetyltransferase (HAT) complex which is involved in transcriptional activation of select genes principally by acetylation of nucleosomal histones H4 and H2A. This modification may both alter nucleosome - DNA interactions and promote interaction of the modified histones with other proteins which positively regulate transcription. This complex may be required for the activation of transcriptional programs associated with oncogene and proto-oncogene mediated growth induction, tumor suppressor mediated growth arrest and replicative senescence, apoptosis, and DNA repair. The NuA4 complex ATPase and helicase activities seem to be, at least in part, contributed by the association of RUVBL1 and RUVBL2 with EP400. NuA4 may also play a direct role in DNA repair when directly recruited to sites of DNA damage. As part of the SIN3B complex represses transcription and counteracts the histone acetyltransferase activity of EP300 through the recognition H3K27ac marks by PHF12 and the activity of the histone deacetylase HDAC2. SIN3B complex is recruited downstream of the constitutively active genes transcriptional start sites through interaction with histones and mitigates histone acetylation and RNA polymerase II progression within transcribed regions contributing to the regulation of transcription. Required for homologous recombination repair (HRR) and resistance to mitomycin C (MMC). Involved in the localization of PALB2, BRCA2 and RAD51, but not BRCA1, to DNA-damage foci. In Rattus norvegicus (Rat), this protein is Mortality factor 4-like protein 1 (Morf4l1).